The primary structure comprises 322 residues: Probable ethanolamine-phosphate cytidylyltransferase (322 aa).

It belongs to the cytidylyltransferase family.

It catalyses the reaction phosphoethanolamine + CTP + H(+) = CDP-ethanolamine + diphosphate. It participates in phospholipid metabolism; phosphatidylethanolamine biosynthesis; phosphatidylethanolamine from ethanolamine: step 2/3. The polypeptide is Probable ethanolamine-phosphate cytidylyltransferase (MUQ1) (Encephalitozoon cuniculi (strain GB-M1) (Microsporidian parasite)).